Reading from the N-terminus, the 576-residue chain is Plant intracellular Ras-group-related LRR protein 4 (576 aa).

Residues 130 to 151 (AAPAAATTTTSTAAAGSSSSSA) are compositionally biased toward low complexity. A disordered region spans residues 130 to 181 (AAPAAATTTTSTAAAGSSSSSAVGNAERHASSGTNGFTASRVAGTSTSTGRV). The segment covering 160-180 (SSGTNGFTASRVAGTSTSTGR) has biased composition (polar residues). LRR repeat units lie at residues 272 to 295 (LTGLVTLDISENRLLALPDAIGKL), 296 to 318 (FSLAKLDIHANRISQLPESIGDL), 320 to 341 (SLIYLNMRGNQLSSLPSSIGRL), 342 to 364 (LNLEELDVGSNGLSSLPDSIGSL), 366 to 387 (RLKKLIVETNDLDELPYTIGHC), 389 to 410 (SLVELQAGYNHLKALPEAVGKL), 411 to 433 (EPLEILSVRYNNLRSLPTTMASL), 434 to 456 (TKLKEVDVSFNELESIPENFCFA), 458 to 481 (SLIKLNVGNNFADLQYLPRSIGNL), 482 to 503 (EMLEELDMSNNQIRVLPDSFGN), and 505 to 527 (KHLRVLRAEENPLQVPPRDIALK). The short motif at 528-535 (GAQAVVQY) is the GVYW; degenerate element.

It belongs to the SHOC2 family. Widely expressed.

Functionally, leucine-rich repeat protein that likely mediates protein interactions, possibly in the context of signal transduction. The protein is Plant intracellular Ras-group-related LRR protein 4 (IRL4) of Oryza sativa subsp. japonica (Rice).